The chain runs to 467 residues: ATP synthase subunit beta, sodium ion specific (467 aa).

ATP is bound at residue glycine 151–threonine 158.

Belongs to the ATPase alpha/beta chains family. F-type ATPases have 2 components, CF(1) - the catalytic core - and CF(0) - the membrane proton channel. CF(1) has five subunits: alpha(3), beta(3), gamma(1), delta(1), epsilon(1). CF(0) has three main subunits: a, b and c.

It localises to the cell membrane. The enzyme catalyses 4 Na(+)(in) + ATP + H2O = 4 Na(+)(out) + ADP + phosphate + H(+). Functionally, produces ATP from ADP in the presence of a sodium ion gradient across the membrane. The beta chain is the catalytic subunit. The chain is ATP synthase subunit beta, sodium ion specific from Propionigenium modestum.